We begin with the raw amino-acid sequence, 337 residues long: tRNA N6-adenosine threonylcarbamoyltransferase (337 aa).

The Fe cation site is built by His111 and His115. Substrate-binding positions include Leu134–Gly138, Asp167, Gly180, and Asn272. Residue Asp300 coordinates Fe cation.

The protein belongs to the KAE1 / TsaD family. Fe(2+) is required as a cofactor.

Its subcellular location is the cytoplasm. It catalyses the reaction L-threonylcarbamoyladenylate + adenosine(37) in tRNA = N(6)-L-threonylcarbamoyladenosine(37) in tRNA + AMP + H(+). Its function is as follows. Required for the formation of a threonylcarbamoyl group on adenosine at position 37 (t(6)A37) in tRNAs that read codons beginning with adenine. Is involved in the transfer of the threonylcarbamoyl moiety of threonylcarbamoyl-AMP (TC-AMP) to the N6 group of A37, together with TsaE and TsaB. TsaD likely plays a direct catalytic role in this reaction. This chain is tRNA N6-adenosine threonylcarbamoyltransferase, found in Aeromonas hydrophila subsp. hydrophila (strain ATCC 7966 / DSM 30187 / BCRC 13018 / CCUG 14551 / JCM 1027 / KCTC 2358 / NCIMB 9240 / NCTC 8049).